Here is a 199-residue protein sequence, read N- to C-terminus: Elongation factor Ts (199 aa).

The segment at 80-83 (TDFV) is involved in Mg(2+) ion dislocation from EF-Tu.

The protein belongs to the EF-Ts family.

The protein localises to the cytoplasm. Functionally, associates with the EF-Tu.GDP complex and induces the exchange of GDP to GTP. It remains bound to the aminoacyl-tRNA.EF-Tu.GTP complex up to the GTP hydrolysis stage on the ribosome. The sequence is that of Elongation factor Ts from Thermodesulfovibrio yellowstonii (strain ATCC 51303 / DSM 11347 / YP87).